The chain runs to 178 residues: Peptide deformylase (178 aa).

Fe cation is bound by residues Cys96 and His138. Glu139 is a catalytic residue. His142 is a binding site for Fe cation.

This sequence belongs to the polypeptide deformylase family. Requires Fe(2+) as cofactor.

It carries out the reaction N-terminal N-formyl-L-methionyl-[peptide] + H2O = N-terminal L-methionyl-[peptide] + formate. In terms of biological role, removes the formyl group from the N-terminal Met of newly synthesized proteins. Requires at least a dipeptide for an efficient rate of reaction. N-terminal L-methionine is a prerequisite for activity but the enzyme has broad specificity at other positions. The polypeptide is Peptide deformylase (Bartonella tribocorum (strain CIP 105476 / IBS 506)).